A 302-amino-acid chain; its full sequence is Syntaxin-17 (302 aa).

S2 bears the N-acetylserine mark. The Cytoplasmic segment spans residues 2–228; that stretch reads SEDEEKVKLR…KNLGKAAKYK (227 aa). K41 bears the N6-acetyllysine mark. A coiled-coil region spans residues 53–123; the sequence is EEHINAGRTV…EELKKQFNDE (71 aa). Y157 is modified (phosphotyrosine; by ABL1). Residues 162–224 enclose the t-SNARE coiled-coil homology domain; the sequence is IPRDQNAAES…EEGTKNLGKA (63 aa). The chain crosses the membrane as a helical span at residues 229–249; the sequence is LAALPVAGALIGGVVGGPIGL. The tract at residues 229-275 is necessary and sufficient for localization to autophagosome; sequence LAALPVAGALIGGVVGGPIGLLAGFKVAGIAAALGGGVLGFTGGKLI. The Lumenal segment spans residues 250–254; sequence LAGFK. A helical membrane pass occupies residues 255–275; it reads VAGIAAALGGGVLGFTGGKLI. At 276 to 302 the chain is on the cytoplasmic side; sequence QRRKQKMMEKLASSCPDLPSQTDKKCS. Residue S289 is modified to Phosphoserine. An Endoplasmic reticulum retention signal motif is present at residues 299-302; the sequence is KKCS.

The protein belongs to the syntaxin family. Forms a SNARE complex composed of VAMP8, SNAP29 and STX17 involved in fusion of autophagosome with lysosome. May interact with VTI1B. Probably interacts with BET1, SCFD1 and SEC22B. Interacts with PTPN2 and ABL1; involved in STX17 phosphorylation. Interacts with COPB1. Interacts with TMED9 and TMED10; the interaction is direct. Interacts with VAMP7. Interacts with RUBCNL/PACER; promoting targeting of RUBCNL/PACER to autophagosome. Interacts with VAMP8, SNAP29, VPS39 and VPS41; these interactions are increased in the absence of TMEM39A. Interacts with IRGM; promoting STX17 recruitment to autophagosomes. Interacts with ATG8 proteins GABARAP and MAP1LC3B. Interacts with RNF115; this interaction enhances STX17 stability which in turn promotes autophagosome maturation. Interacts with RAB39A (GTP-bound); the interaction promotes autophagosome-lysosome membrane fusion driven by STX17-SNAP29-VAMP8. Interacts with RAB39B; the interaction may promote a different fonction in autophagy as compared with RAB39A. In terms of processing, phosphorylated at Tyr-157 probably by ABL1. Dephosphorylation by PTPN2; regulates exit from the endoplasmic reticulum.

It localises to the endoplasmic reticulum membrane. The protein resides in the smooth endoplasmic reticulum membrane. The protein localises to the endoplasmic reticulum-Golgi intermediate compartment membrane. Its subcellular location is the cytoplasmic vesicle. It is found in the autophagosome membrane. It localises to the COPII-coated vesicle membrane. The protein resides in the cytoplasm. The protein localises to the cytosol. Its subcellular location is the mitochondrion membrane. It is found in the autolysosome membrane. Its function is as follows. SNAREs, soluble N-ethylmaleimide-sensitive factor-attachment protein receptors, are essential proteins for fusion of cellular membranes. SNAREs localized on opposing membranes assemble to form a trans-SNARE complex, an extended, parallel four alpha-helical bundle that drives membrane fusion. STX17 is a SNARE of the autophagosome involved in autophagy through the direct control of autophagosome membrane fusion with the lysosome membrane. May also play a role in the early secretory pathway where it may maintain the architecture of the endoplasmic reticulum-Golgi intermediate compartment/ERGIC and Golgi and/or regulate transport between the endoplasmic reticulum, the ERGIC and the Golgi. The chain is Syntaxin-17 from Bos taurus (Bovine).